Reading from the N-terminus, the 222-residue chain is C-reactive protein (222 aa).

An N-terminal signal peptide occupies residues 1-19 (MEKLSLCLLVIISLSNAFA). Pyrrolidone carboxylic acid is present on Gln20. The Pentraxin (PTX) domain maps to 24-222 (IGKAFVFPKE…EVYVKPQLWP (199 aa)). Cys55 and Cys113 are disulfide-bonded. Asn78, Glu154, Gln155, Asp156, and Gln166 together coordinate Ca(2+).

This sequence belongs to the pentraxin family. As to quaternary structure, homopentamer. Pentraxin (or pentaxin) have a discoid arrangement of 5 non-covalently bound subunits. Interacts with FCN1; may regulate monocyte activation by FCN1. It depends on Ca(2+) as a cofactor. In terms of tissue distribution, found in plasma.

The protein localises to the secreted. Displays several functions associated with host defense: it promotes agglutination, bacterial capsular swelling, phagocytosis and complement fixation through its calcium-dependent binding to phosphorylcholine. Can interact with DNA and histones and may scavenge nuclear material released from damaged circulating cells. This Sus scrofa (Pig) protein is C-reactive protein (CRP).